The chain runs to 1462 residues: Gag-Pol polyprotein (1462 aa).

Residue G2 is the site of N-myristoyl glycine; by host attachment. Residues 7–31 (VLRGKKADELEKIRLRPGGKKKYRL) form an interaction with Gp41 region. Residues 16 to 22 (LEKIRLR) carry the Nuclear export signal motif. The short motif at 26 to 32 (KKKYRLK) is the Nuclear localization signal element. The tract at residues 191 to 228 (NCVGDHQAAMQIIREIINEEAADWDVQHPIPGPLPAGQ) is interaction with human PPIA/CYPA and NUP153. The interval 279–364 (YNPTNILDIK…GGPGQKARLM (86 aa)) is dimerization/Multimerization of capsid protein p24. CCHC-type zinc fingers lie at residues 388–405 (IKCWNCGKEGHSARQCRA) and 409–426 (QGCWKCGKSGHIMANCPD). Positions 441–507 (APQLPRGPKF…RRDTTQRDDR (67 aa)) are disordered. Over residues 454-468 (NTNSTPNGSSSGPTG) the composition is skewed to low complexity. Basic and acidic residues-rich tracts occupy residues 471 to 490 (HAAREKTERAETKTIQRSDR) and 497 to 507 (ARRDTTQRDDR). The dimerization of protease stretch occupies residues 512–516 (PQFSL). The region spanning 531–600 (VEVLLDTGAD…TPINIFGRNI (70 aa)) is the Peptidase A2 domain. The active-site For protease activity; shared with dimeric partner is D536. Dimerization of protease stretches follow at residues 560-566 (GIGGFIN) and 599-611 (NILTALGMSLNLP). Positions 654–844 (EGQLEEAPPT…PPYQWMGYEL (191 aa)) constitute a Reverse transcriptase domain. Residues D720, D795, and D796 each contribute to the Mg(2+) site. Residues 837-845 (YQWMGYELW) are RT 'primer grip'. The short motif at 1007–1023 (WEQWWDNYWQVTWIPDW) is the Tryptophan repeat motif element. The region spanning 1043–1166 (IPGAETFYTD…IDHLVSQGIR (124 aa)) is the RNase H type-1 domain. Positions 1052, 1087, 1107, and 1158 each coordinate Mg(2+). The Integrase-type zinc finger occupies 1172-1213 (ERIEPAQEEHGKYHSNVKELAHKFGLPNLVARQIVNTCAQCQ). The Zn(2+) site is built by H1181, H1185, C1209, and C1212. One can recognise an Integrase catalytic domain in the interval 1222-1373 (QVNAELGTWQ…TPVERLVNMI (152 aa)). Positions 1233, 1285, and 1321 each coordinate Mg(2+). Residues 1392 to 1439 (FRVYFREGRNQLWQGPGELLWKGDGAVIVKVGTDIKVIPRRKAKIIRD) constitute a DNA-binding region (integrase-type). The interval 1443 to 1462 (RQEMDSGSHLEGAREDGEMA) is disordered.

In terms of assembly, homotrimer; further assembles as hexamers of trimers. Interacts with gp41 (via C-terminus). Interacts with host CALM1; this interaction induces a conformational change in the Matrix protein, triggering exposure of the myristate group. Interacts with host AP3D1; this interaction allows the polyprotein trafficking to multivesicular bodies during virus assembly. Part of the pre-integration complex (PIC) which is composed of viral genome, matrix protein, Vpr and integrase. Homodimer; the homodimer further multimerizes as homohexamers or homopentamers. Interacts with human PPIA/CYPA. Interacts with human NUP153. Interacts with host PDZD8; this interaction stabilizes the capsid. Interacts with monkey TRIM5; this interaction destabilizes the capsid. As to quaternary structure, homodimer, whose active site consists of two apposed aspartic acid residues. In terms of assembly, heterodimer of p66 RT and p51 RT (RT p66/p51). Heterodimerization of RT is essential for DNA polymerase activity. The overall folding of the subdomains is similar in p66 RT and p51 RT but the spatial arrangements of the subdomains are dramatically different. Homotetramer; may further associate as a homohexadecamer. Part of the pre-integration complex (PIC) which is composed of viral genome, matrix protein, Vpr and integrase. Interacts with human SMARCB1/INI1 and human PSIP1/LEDGF isoform 1. Interacts with human KPNA3; this interaction might play a role in nuclear import of the pre-integration complex. Interacts with human NUP153; this interaction might play a role in nuclear import of the pre-integration complex. Mg(2+) serves as cofactor. In terms of processing, specific enzymatic cleavages by the viral protease yield mature proteins. The protease is released by autocatalytic cleavage. The polyprotein is cleaved during and after budding, this process is termed maturation. Proteolytic cleavage of p66 RT removes the RNase H domain to yield the p51 RT subunit. Nucleocapsid protein p7 might be further cleaved after virus entry.

The protein localises to the host cell membrane. Its subcellular location is the host endosome. It localises to the host multivesicular body. The protein resides in the virion membrane. It is found in the host nucleus. The protein localises to the host cytoplasm. Its subcellular location is the virion. The enzyme catalyses Endopeptidase for which the P1 residue is preferably hydrophobic.. The catalysed reaction is Endohydrolysis of RNA in RNA/DNA hybrids. Three different cleavage modes: 1. sequence-specific internal cleavage of RNA. Human immunodeficiency virus type 1 and Moloney murine leukemia virus enzymes prefer to cleave the RNA strand one nucleotide away from the RNA-DNA junction. 2. RNA 5'-end directed cleavage 13-19 nucleotides from the RNA end. 3. DNA 3'-end directed cleavage 15-20 nucleotides away from the primer terminus.. It carries out the reaction 3'-end directed exonucleolytic cleavage of viral RNA-DNA hybrid.. It catalyses the reaction DNA(n) + a 2'-deoxyribonucleoside 5'-triphosphate = DNA(n+1) + diphosphate. With respect to regulation, protease: The viral protease is inhibited by many synthetic protease inhibitors (PIs), such as amprenavir, atazanavir, indinavir, loprinavir, nelfinavir, ritonavir and saquinavir. Use of protease inhibitors in tritherapy regimens permit more ambitious therapeutic strategies. Reverse transcriptase/ribonuclease H: RT can be inhibited either by nucleoside RT inhibitors (NRTIs) or by non nucleoside RT inhibitors (NNRTIs). NRTIs act as chain terminators, whereas NNRTIs inhibit DNA polymerization by binding a small hydrophobic pocket near the RT active site and inducing an allosteric change in this region. Classical NRTIs are abacavir, adefovir (PMEA), didanosine (ddI), lamivudine (3TC), stavudine (d4T), tenofovir (PMPA), zalcitabine (ddC), and zidovudine (AZT). Classical NNRTIs are atevirdine (BHAP U-87201E), delavirdine, efavirenz (DMP-266), emivirine (I-EBU), and nevirapine (BI-RG-587). The tritherapies used as a basic effective treatment of AIDS associate two NRTIs and one NNRTI. Its function is as follows. Mediates, with Gag polyprotein, the essential events in virion assembly, including binding the plasma membrane, making the protein-protein interactions necessary to create spherical particles, recruiting the viral Env proteins, and packaging the genomic RNA via direct interactions with the RNA packaging sequence (Psi). Gag-Pol polyprotein may regulate its own translation, by the binding genomic RNA in the 5'-UTR. At low concentration, the polyprotein would promote translation, whereas at high concentration, the polyprotein would encapsidate genomic RNA and then shut off translation. Targets the polyprotein to the plasma membrane via a multipartite membrane-binding signal, that includes its myristoylated N-terminus. Matrix protein is part of the pre-integration complex. Implicated in the release from host cell mediated by Vpu. Binds to RNA. In terms of biological role, forms the conical core that encapsulates the genomic RNA-nucleocapsid complex in the virion. Most core are conical, with only 7% tubular. The core is constituted by capsid protein hexamer subunits. The core is disassembled soon after virion entry. Host restriction factors such as TRIM5-alpha or TRIMCyp bind retroviral capsids and cause premature capsid disassembly, leading to blocks in reverse transcription. Capsid restriction by TRIM5 is one of the factors which restricts HIV-1 to the human species. Host PIN1 apparently facilitates the virion uncoating. On the other hand, interactions with PDZD8 or CYPA stabilize the capsid. Functionally, encapsulates and protects viral dimeric unspliced genomic RNA (gRNA). Binds these RNAs through its zinc fingers. Acts as a nucleic acid chaperone which is involved in rearangement of nucleic acid secondary structure during gRNA retrotranscription. Also facilitates template switch leading to recombination. As part of the polyprotein, participates in gRNA dimerization, packaging, tRNA incorporation and virion assembly. Its function is as follows. Aspartyl protease that mediates proteolytic cleavages of Gag and Gag-Pol polyproteins during or shortly after the release of the virion from the plasma membrane. Cleavages take place as an ordered, step-wise cascade to yield mature proteins. This process is called maturation. Displays maximal activity during the budding process just prior to particle release from the cell. Also cleaves Nef and Vif, probably concomitantly with viral structural proteins on maturation of virus particles. Hydrolyzes host EIF4GI and PABP1 in order to shut off the capped cellular mRNA translation. The resulting inhibition of cellular protein synthesis serves to ensure maximal viral gene expression and to evade host immune response. Multifunctional enzyme that converts the viral RNA genome into dsDNA in the cytoplasm, shortly after virus entry into the cell. This enzyme displays a DNA polymerase activity that can copy either DNA or RNA templates, and a ribonuclease H (RNase H) activity that cleaves the RNA strand of RNA-DNA heteroduplexes in a partially processive 3' to 5' endonucleasic mode. Conversion of viral genomic RNA into dsDNA requires many steps. A tRNA(3)-Lys binds to the primer-binding site (PBS) situated at the 5'-end of the viral RNA. RT uses the 3' end of the tRNA primer to perform a short round of RNA-dependent minus-strand DNA synthesis. The reading proceeds through the U5 region and ends after the repeated (R) region which is present at both ends of viral RNA. The portion of the RNA-DNA heteroduplex is digested by the RNase H, resulting in a ssDNA product attached to the tRNA primer. This ssDNA/tRNA hybridizes with the identical R region situated at the 3' end of viral RNA. This template exchange, known as minus-strand DNA strong stop transfer, can be either intra- or intermolecular. RT uses the 3' end of this newly synthesized short ssDNA to perform the RNA-dependent minus-strand DNA synthesis of the whole template. RNase H digests the RNA template except for two polypurine tracts (PPTs) situated at the 5'-end and near the center of the genome. It is not clear if both polymerase and RNase H activities are simultaneous. RNase H probably can proceed both in a polymerase-dependent (RNA cut into small fragments by the same RT performing DNA synthesis) and a polymerase-independent mode (cleavage of remaining RNA fragments by free RTs). Secondly, RT performs DNA-directed plus-strand DNA synthesis using the PPTs that have not been removed by RNase H as primers. PPTs and tRNA primers are then removed by RNase H. The 3' and 5' ssDNA PBS regions hybridize to form a circular dsDNA intermediate. Strand displacement synthesis by RT to the PBS and PPT ends produces a blunt ended, linear dsDNA copy of the viral genome that includes long terminal repeats (LTRs) at both ends. In terms of biological role, catalyzes viral DNA integration into the host chromosome, by performing a series of DNA cutting and joining reactions. This enzyme activity takes place after virion entry into a cell and reverse transcription of the RNA genome in dsDNA. The first step in the integration process is 3' processing. This step requires a complex comprising the viral genome, matrix protein, Vpr and integrase. This complex is called the pre-integration complex (PIC). The integrase protein removes 2 nucleotides from each 3' end of the viral DNA, leaving recessed CA OH's at the 3' ends. In the second step, the PIC enters cell nucleus. This process is mediated through integrase and Vpr proteins, and allows the virus to infect a non dividing cell. This ability to enter the nucleus is specific of lentiviruses, other retroviruses cannot and rely on cell division to access cell chromosomes. In the third step, termed strand transfer, the integrase protein joins the previously processed 3' ends to the 5' ends of strands of target cellular DNA at the site of integration. The 5'-ends are produced by integrase-catalyzed staggered cuts, 5 bp apart. A Y-shaped, gapped, recombination intermediate results, with the 5'-ends of the viral DNA strands and the 3' ends of target DNA strands remaining unjoined, flanking a gap of 5 bp. The last step is viral DNA integration into host chromosome. This involves host DNA repair synthesis in which the 5 bp gaps between the unjoined strands are filled in and then ligated. Since this process occurs at both cuts flanking the HIV genome, a 5 bp duplication of host DNA is produced at the ends of HIV-1 integration. Alternatively, Integrase may catalyze the excision of viral DNA just after strand transfer, this is termed disintegration. This is Gag-Pol polyprotein (gag-pol) from Human immunodeficiency virus type 2 subtype A (isolate SBLISY) (HIV-2).